The sequence spans 143 residues: Transthyretin-like protein 33 (143 aa).

An N-terminal signal peptide occupies residues 1–20 (MSRLACISSLFILCAIGSEA).

The protein belongs to the nematode transthyretin-like family. Expressed in head cells next to and anterior of the first pharyngeal bulb, the pharynx, and the hypodermis.

The protein localises to the secreted. Its function is as follows. Protects dopaminergic neurons from degeneration caused by oxidative stress. The polypeptide is Transthyretin-like protein 33 (Caenorhabditis elegans).